The chain runs to 628 residues: uncharacterized protein (628 aa).

The protein belongs to the ATP-dependent AMP-binding enzyme family.

This is an uncharacterized protein from Pseudomonas aeruginosa (strain ATCC 15692 / DSM 22644 / CIP 104116 / JCM 14847 / LMG 12228 / 1C / PRS 101 / PAO1).